We begin with the raw amino-acid sequence, 89 residues long: Small ribosomal subunit protein uS15 (89 aa).

It belongs to the universal ribosomal protein uS15 family. As to quaternary structure, part of the 30S ribosomal subunit. Forms a bridge to the 50S subunit in the 70S ribosome, contacting the 23S rRNA.

One of the primary rRNA binding proteins, it binds directly to 16S rRNA where it helps nucleate assembly of the platform of the 30S subunit by binding and bridging several RNA helices of the 16S rRNA. Functionally, forms an intersubunit bridge (bridge B4) with the 23S rRNA of the 50S subunit in the ribosome. The polypeptide is Small ribosomal subunit protein uS15 (Bacteroides fragilis (strain ATCC 25285 / DSM 2151 / CCUG 4856 / JCM 11019 / LMG 10263 / NCTC 9343 / Onslow / VPI 2553 / EN-2)).